The primary structure comprises 1590 residues: Pentafunctional AROM polypeptide (1590 aa).

Residues 1 to 400 (MSTANGSSPT…HEPKASSVDD (400 aa)) form a 3-dehydroquinate synthase region. NAD(+) contacts are provided by residues 49 to 51 (DTN), 96 to 99 (EGSK), 127 to 129 (GGV), and Asp-132. Residue Arg-143 participates in 7-phospho-2-dehydro-3-deoxy-D-arabino-heptonate binding. Position 152–153 (152–153 (TT)) interacts with NAD(+). 7-phospho-2-dehydro-3-deoxy-D-arabino-heptonate is bound by residues Asp-159 and Lys-165. Lys-174 contacts NAD(+). 7-phospho-2-dehydro-3-deoxy-D-arabino-heptonate is bound at residue Asn-175. NAD(+) contacts are provided by residues 192-195 (FLNT) and Asn-203. A Zn(2+)-binding site is contributed by Glu-207. 7-phospho-2-dehydro-3-deoxy-D-arabino-heptonate is bound by residues 207–210 (EVIK) and Lys-266. Residue Glu-276 is the Proton acceptor; for 3-dehydroquinate synthase activity of the active site. Residues 280–284 (RNLLN) and His-287 contribute to the 7-phospho-2-dehydro-3-deoxy-D-arabino-heptonate site. His-287 provides a ligand contact to Zn(2+). Residue His-291 is the Proton acceptor; for 3-dehydroquinate synthase activity of the active site. 7-phospho-2-dehydro-3-deoxy-D-arabino-heptonate contacts are provided by His-303 and Lys-372. His-303 is a Zn(2+) binding site. The tract at residues 413–856 (VQPGVRPGLK…WDVLSGVFGV (444 aa)) is EPSP synthase. The active-site For EPSP synthase activity is Cys-838. The interval 876–1070 (NRSVFVIGMR…KAKPHSFFVS (195 aa)) is shikimate kinase. Residue 883 to 890 (GMRGAGKS) participates in ATP binding. Positions 1071 to 1285 (LTVPNITAHT…AAPGQLTAAE (215 aa)) are 3-dehydroquinase. Residue His-1187 is the Proton acceptor; for 3-dehydroquinate dehydratase activity of the active site. The active-site Schiff-base intermediate with substrate; for 3-dehydroquinate dehydratase activity is Lys-1215. The tract at residues 1298–1590 (KRKFYLFGKP…IVMNGTSDSS (293 aa)) is shikimate dehydrogenase.

It in the N-terminal section; belongs to the sugar phosphate cyclases superfamily. Dehydroquinate synthase family. In the 2nd section; belongs to the EPSP synthase family. This sequence in the 3rd section; belongs to the shikimate kinase family. The protein in the 4th section; belongs to the type-I 3-dehydroquinase family. It in the C-terminal section; belongs to the shikimate dehydrogenase family. In terms of assembly, homodimer. The cofactor is Zn(2+).

The protein resides in the cytoplasm. It catalyses the reaction 7-phospho-2-dehydro-3-deoxy-D-arabino-heptonate = 3-dehydroquinate + phosphate. It carries out the reaction 3-dehydroquinate = 3-dehydroshikimate + H2O. The enzyme catalyses shikimate + NADP(+) = 3-dehydroshikimate + NADPH + H(+). The catalysed reaction is shikimate + ATP = 3-phosphoshikimate + ADP + H(+). It catalyses the reaction 3-phosphoshikimate + phosphoenolpyruvate = 5-O-(1-carboxyvinyl)-3-phosphoshikimate + phosphate. Its pathway is metabolic intermediate biosynthesis; chorismate biosynthesis; chorismate from D-erythrose 4-phosphate and phosphoenolpyruvate: step 2/7. The protein operates within metabolic intermediate biosynthesis; chorismate biosynthesis; chorismate from D-erythrose 4-phosphate and phosphoenolpyruvate: step 3/7. It participates in metabolic intermediate biosynthesis; chorismate biosynthesis; chorismate from D-erythrose 4-phosphate and phosphoenolpyruvate: step 4/7. It functions in the pathway metabolic intermediate biosynthesis; chorismate biosynthesis; chorismate from D-erythrose 4-phosphate and phosphoenolpyruvate: step 5/7. Its pathway is metabolic intermediate biosynthesis; chorismate biosynthesis; chorismate from D-erythrose 4-phosphate and phosphoenolpyruvate: step 6/7. Functionally, the AROM polypeptide catalyzes 5 consecutive enzymatic reactions in prechorismate polyaromatic amino acid biosynthesis. This Pyricularia oryzae (strain 70-15 / ATCC MYA-4617 / FGSC 8958) (Rice blast fungus) protein is Pentafunctional AROM polypeptide.